We begin with the raw amino-acid sequence, 428 residues long: 3-phosphoshikimate 1-carboxyvinyltransferase (428 aa).

K23, S24, and R28 together coordinate 3-phosphoshikimate. Residue K23 participates in phosphoenolpyruvate binding. Residues G97 and R125 each contribute to the phosphoenolpyruvate site. The 3-phosphoshikimate site is built by S170, S171, Q172, S198, D314, N337, and K341. Q172 lines the phosphoenolpyruvate pocket. Catalysis depends on D314, which acts as the Proton acceptor. R345, R387, and K412 together coordinate phosphoenolpyruvate.

The protein belongs to the EPSP synthase family. In terms of assembly, monomer.

The protein localises to the cytoplasm. It catalyses the reaction 3-phosphoshikimate + phosphoenolpyruvate = 5-O-(1-carboxyvinyl)-3-phosphoshikimate + phosphate. The protein operates within metabolic intermediate biosynthesis; chorismate biosynthesis; chorismate from D-erythrose 4-phosphate and phosphoenolpyruvate: step 6/7. In terms of biological role, catalyzes the transfer of the enolpyruvyl moiety of phosphoenolpyruvate (PEP) to the 5-hydroxyl of shikimate-3-phosphate (S3P) to produce enolpyruvyl shikimate-3-phosphate and inorganic phosphate. The protein is 3-phosphoshikimate 1-carboxyvinyltransferase of Yersinia pseudotuberculosis serotype IB (strain PB1/+).